A 68-amino-acid chain; its full sequence is Neuronal regeneration-related protein (68 aa).

Residues 21-54 are disordered; it reads MEGRLPKGRLPVPKEVNRKKNDETNAASLTPLGS. Positions 44-54 are enriched in polar residues; the sequence is TNAASLTPLGS.

As to quaternary structure, interacts with the latency-associated peptides (LAP) of TGFB1 and TGFB2; the interaction results in a decrease in TGFB autoinduction. Interacts with FLNA. In terms of processing, phosphorylated on Ser-59. Phosphorylation decreases stability and activity.

The protein localises to the cytoplasm. May have roles in neural function and cellular differentiation. Ectopic expression promotes axonal regeneration, induces differentiation of fibroblast into myofibroblast, induces myofibroblast ameboid migration, augments motility of gliomas, and increases retinoic-acid regulation of lipid-droplet biogenesis. Down-regulates the expression of TGFB1 and TGFB2 but not of TGFB3. May play a role in the regulation of alveolar generation. The chain is Neuronal regeneration-related protein (NREP) from Pongo abelii (Sumatran orangutan).